A 90-amino-acid polypeptide reads, in one-letter code: Essential MCU regulator, mitochondrial (90 aa).

The helical transmembrane segment at 49–68 (GVLKLIFVSASSLYIGGLIA) threads the bilayer.

This sequence belongs to the SMDT1/EMRE family.

It is found in the mitochondrion inner membrane. Its function is as follows. Essential regulatory subunit of the mitochondrial calcium uniporter (mcu-1) channel, a protein that mediates calcium uptake into mitochondria. This chain is Essential MCU regulator, mitochondrial, found in Caenorhabditis elegans.